A 511-amino-acid polypeptide reads, in one-letter code: Inositol-3-phosphate synthase (511 aa).

Residues glycine 70, asparagine 71, asparagine 72, aspartate 143, serine 179, isoleucine 180, glutamine 190, arginine 193, serine 230, alanine 231, asparagine 232, threonine 233, glycine 281, serine 282, aspartate 306, threonine 309, asparagine 340, asparagine 341, aspartate 342, lysine 355, glycine 393, aspartate 394, aspartate 422, and serine 423 each coordinate NAD(+).

It belongs to the myo-inositol 1-phosphate synthase family. NAD(+) serves as cofactor.

The protein resides in the cytoplasm. The catalysed reaction is D-glucose 6-phosphate = 1D-myo-inositol 3-phosphate. It participates in polyol metabolism; myo-inositol biosynthesis; myo-inositol from D-glucose 6-phosphate: step 1/2. In terms of biological role, key enzyme in myo-inositol biosynthesis pathway that catalyzes the conversion of glucose 6-phosphate to 1-myo-inositol 1-phosphate in a NAD-dependent manner. Rate-limiting enzyme in the synthesis of all inositol-containing compounds. The protein is Inositol-3-phosphate synthase (ino1) of Dictyostelium discoideum (Social amoeba).